The primary structure comprises 435 residues: 5-methylthioadenosine/S-adenosylhomocysteine deaminase (435 aa).

Zn(2+) contacts are provided by His65 and His67. 3 residues coordinate substrate: Glu94, Arg150, and His189. His216 lines the Zn(2+) pocket. Glu219 and Asp304 together coordinate substrate. Asp304 is a binding site for Zn(2+).

The protein belongs to the metallo-dependent hydrolases superfamily. MTA/SAH deaminase family. Zn(2+) serves as cofactor.

It catalyses the reaction S-adenosyl-L-homocysteine + H2O + H(+) = S-inosyl-L-homocysteine + NH4(+). The catalysed reaction is S-methyl-5'-thioadenosine + H2O + H(+) = S-methyl-5'-thioinosine + NH4(+). Catalyzes the deamination of 5-methylthioadenosine and S-adenosyl-L-homocysteine into 5-methylthioinosine and S-inosyl-L-homocysteine, respectively. Is also able to deaminate adenosine. This is 5-methylthioadenosine/S-adenosylhomocysteine deaminase from Bacillus thuringiensis (strain Al Hakam).